Here is a 208-residue protein sequence, read N- to C-terminus: Protein TIC 20-II, chloroplastic (208 aa).

The N-terminal 49 residues, Met1–Arg49, are a transit peptide targeting the chloroplast. Transmembrane regions (helical) follow at residues Val61 to Ala83, Leu101 to Val121, Ala134 to Leu154, and Thr172 to Gly192.

Belongs to the Tic20 family. In terms of assembly, part of the Tic complex. As to expression, expressed in leaves, siliques and roots.

It is found in the plastid. Its subcellular location is the chloroplast inner membrane. Its function is as follows. May be involved in protein precursor import into chloroplasts. Not redundant with TIC20-I, TIC20-IV or TIC20-V. The sequence is that of Protein TIC 20-II, chloroplastic (TIC20-II) from Arabidopsis thaliana (Mouse-ear cress).